Reading from the N-terminus, the 479-residue chain is Cysteine--tRNA ligase (479 aa).

Cysteine 29 is a Zn(2+) binding site. Positions 31-41 (ATVQGAPHIGH) match the 'HIGH' region motif. A disordered region spans residues 171 to 197 (QRVEDMQDAPDADPRGKRDPRDFALWK). Over residues 182-197 (ADPRGKRDPRDFALWK) the composition is skewed to basic and acidic residues. Zn(2+) contacts are provided by cysteine 224, histidine 249, and glutamate 253. Positions 280–284 (KMSKS) match the 'KMSKS' region motif. ATP is bound at residue lysine 283.

This sequence belongs to the class-I aminoacyl-tRNA synthetase family. Monomer. Requires Zn(2+) as cofactor.

The protein resides in the cytoplasm. It catalyses the reaction tRNA(Cys) + L-cysteine + ATP = L-cysteinyl-tRNA(Cys) + AMP + diphosphate. In Kocuria rhizophila (strain ATCC 9341 / DSM 348 / NBRC 103217 / DC2201), this protein is Cysteine--tRNA ligase.